Consider the following 299-residue polypeptide: ATP synthase gamma chain (299 aa).

This sequence belongs to the ATPase gamma chain family. As to quaternary structure, F-type ATPases have 2 components, CF(1) - the catalytic core - and CF(0) - the membrane proton channel. CF(1) has five subunits: alpha(3), beta(3), gamma(1), delta(1), epsilon(1). CF(0) has three main subunits: a, b and c.

Its subcellular location is the cell inner membrane. In terms of biological role, produces ATP from ADP in the presence of a proton gradient across the membrane. The gamma chain is believed to be important in regulating ATPase activity and the flow of protons through the CF(0) complex. In Rhodospirillum rubrum, this protein is ATP synthase gamma chain.